Consider the following 131-residue polypeptide: Aspartate 1-decarboxylase (131 aa).

Serine 25 acts as the Schiff-base intermediate with substrate; via pyruvic acid in catalysis. Pyruvic acid (Ser) is present on serine 25. Threonine 57 contributes to the substrate binding site. Tyrosine 58 functions as the Proton donor in the catalytic mechanism. 73–75 (GAA) contacts substrate.

It belongs to the PanD family. Heterooctamer of four alpha and four beta subunits. Pyruvate serves as cofactor. In terms of processing, is synthesized initially as an inactive proenzyme, which is activated by self-cleavage at a specific serine bond to produce a beta-subunit with a hydroxyl group at its C-terminus and an alpha-subunit with a pyruvoyl group at its N-terminus.

Its subcellular location is the cytoplasm. It carries out the reaction L-aspartate + H(+) = beta-alanine + CO2. It participates in cofactor biosynthesis; (R)-pantothenate biosynthesis; beta-alanine from L-aspartate: step 1/1. In terms of biological role, catalyzes the pyruvoyl-dependent decarboxylation of aspartate to produce beta-alanine. The sequence is that of Aspartate 1-decarboxylase from Anaeromyxobacter dehalogenans (strain 2CP-C).